The chain runs to 255 residues: Type III pantothenate kinase (255 aa).

D6–V13 is a binding site for ATP. Residues Y100 and G107–R110 each bind substrate. D109 serves as the catalytic Proton acceptor. Residue D129 coordinates K(+). T132 provides a ligand contact to ATP. A substrate-binding site is contributed by T184.

Belongs to the type III pantothenate kinase family. As to quaternary structure, homodimer. NH4(+) serves as cofactor. K(+) is required as a cofactor.

Its subcellular location is the cytoplasm. It catalyses the reaction (R)-pantothenate + ATP = (R)-4'-phosphopantothenate + ADP + H(+). The protein operates within cofactor biosynthesis; coenzyme A biosynthesis; CoA from (R)-pantothenate: step 1/5. Functionally, catalyzes the phosphorylation of pantothenate (Pan), the first step in CoA biosynthesis. The sequence is that of Type III pantothenate kinase from Syntrophomonas wolfei subsp. wolfei (strain DSM 2245B / Goettingen).